The sequence spans 440 residues: Frizzled/smoothened-like sans CRD protein D (440 aa).

An N-terminal signal peptide occupies residues 1–27 (MFIILKFLISFFLICNFFNYNDHFASG). Topologically, residues 28 to 85 (QTLPPGFCPSPLIYRNSTNRQNDIENGYLFIGQTNCTSPCPSLIFSENEWHRVYNMSL) are extracellular. 3 N-linked (GlcNAc...) asparagine glycosylation sites follow: N43, N62, and N82. A helical membrane pass occupies residues 86–106 (IAGTISMFALIFLIITYSPLV). The Cytoplasmic segment spans residues 107-110 (NKYN). Residues 111-131 (GYTRHTVGILFLFCGIFLTVT) traverse the membrane as a helical segment. At 132-162 (TDGRQLWDIDLGFEKYCPEPGRFARQSDTKC) the chain is on the extracellular side. Residues 163 to 183 (LVTAIFFQYGCVTSILWWAAI) form a helical membrane-spanning segment. Residues 184–200 (SVDLWMTIRKVKISKLQ) lie on the Cytoplasmic side of the membrane. The chain crosses the membrane as a helical span at residues 201-221 (FITYAVILNIITLILTFAPIA). At 222 to 244 (SKQYGYGEAAIGCWLMDLKYQVG) the chain is on the extracellular side. A helical transmembrane segment spans residues 245-265 (YFWAPVGFCLCVGCVSIVLII). The Cytoplasmic portion of the chain corresponds to 266–285 (REIYKVSDAIKKKLLAKHLK). Residues 286-306 (PLMLIILMLSEFIYMFIFYSY) traverse the membrane as a helical segment. The Extracellular segment spans residues 307–346 (TTSRRGHYHDVVEKYIRCLFINASNPSICEVDVSISSPAH). N328 carries an N-linked (GlcNAc...) asparagine glycan. The chain crosses the membrane as a helical span at residues 347–367 (FFFHFCMRLMGIEGLIFFGFT). Topologically, residues 368-440 (RQTKRIWLRS…IELSGVDSKN (73 aa)) are cytoplasmic. The disordered stretch occupies residues 395–428 (ISSDEKTSNSSHRTTRGCRETEFGESIEQSNDPE).

This sequence belongs to the G-protein coupled receptor Fz/Smo family.

It localises to the membrane. This is Frizzled/smoothened-like sans CRD protein D (fscD) from Dictyostelium discoideum (Social amoeba).